A 103-amino-acid chain; its full sequence is MNREEVQLLGFEIVAFAGDARSKFLEALTAAQAGDFAKADALIEEGNNCIAEAHRAQTSLLAKEAQGDDIAYSVTMMHGQDHLMTTILLKDLMKHLLEFYKRG.

The region spanning 1 to 102 is the PTS EIIA type-3 domain; it reads MNREEVQLLG…MKHLLEFYKR (102 aa). Residue H78 is the Tele-phosphohistidine intermediate of the active site. Position 78 is a phosphohistidine; by HPr (H78). Position 81 (D81) interacts with Mg(2+).

In terms of assembly, homotrimer. Requires Mg(2+) as cofactor.

It is found in the cytoplasm. In terms of biological role, the phosphoenolpyruvate-dependent sugar phosphotransferase system (sugar PTS), a major carbohydrate active transport system, catalyzes the phosphorylation of incoming sugar substrates concomitantly with their translocation across the cell membrane. The enzyme II LacEF PTS system is involved in lactose transport. The sequence is that of PTS system lactose-specific EIIA component from Staphylococcus aureus (strain COL).